Here is a 152-residue protein sequence, read N- to C-terminus: Large ribosomal subunit protein uL22 (152 aa).

The protein belongs to the universal ribosomal protein uL22 family. Part of the 50S ribosomal subunit.

Functionally, this protein binds specifically to 23S rRNA. It makes multiple contacts with different domains of the 23S rRNA in the assembled 50S subunit and ribosome. Its function is as follows. The globular domain of the protein is located near the polypeptide exit tunnel on the outside of the subunit, while an extended beta-hairpin is found that lines the wall of the exit tunnel in the center of the 70S ribosome. This Cenarchaeum symbiosum (strain A) protein is Large ribosomal subunit protein uL22.